The following is a 364-amino-acid chain: MSLQSIKYSRGSLDILDQLLLPVQSKYVAVRGVEDGWKVINKMQVRGAPAIAIVGCLSLAVEIYPEEFESKKRLRQEVEGKLNYLVSARPTAVNMKIAADELLALANDLTKDETIDVAGMKERFLNATEAMLEKDIADNQAIGSHGAQAILKRVAEAAGAQTGTAGPVRVLTHCNTGSLATAGYGTALGVVRQLAELGKLEHVYCTETRPYNQGARLTAYELVHEKFPATLVLDSMVAALLRAKNVAGVVVGADRVAANGDTANKIGTYQIAVVAKHHGVPFYVAAPLTSIDLAIPGGDHIIIEERPDREMTHVGEHRIAAPGINCWNPAFDVTPASLITGIITERGVFKPEELKEAITKLLES.

Asp254 acts as the Proton donor in catalysis.

This sequence belongs to the eIF-2B alpha/beta/delta subunits family. MtnA subfamily.

Its subcellular location is the cytoplasm. The protein localises to the nucleus. The enzyme catalyses 5-(methylsulfanyl)-alpha-D-ribose 1-phosphate = 5-(methylsulfanyl)-D-ribulose 1-phosphate. Its pathway is amino-acid biosynthesis; L-methionine biosynthesis via salvage pathway; L-methionine from S-methyl-5-thio-alpha-D-ribose 1-phosphate: step 1/6. Its function is as follows. Catalyzes the interconversion of methylthioribose-1-phosphate (MTR-1-P) into methylthioribulose-1-phosphate (MTRu-1-P). The chain is Methylthioribose-1-phosphate isomerase from Drosophila ananassae (Fruit fly).